Here is a 294-residue protein sequence, read N- to C-terminus: Major pollen allergen Pha a 5.3 (294 aa).

The first 25 residues, 1–25, serve as a signal peptide directing secretion; the sequence is MAVQKYTVALFLAMALVAGPAASYA.

Belongs to the Poa p IX/Phl p VI allergen family.

This is Major pollen allergen Pha a 5.3 from Phalaris aquatica (Canary grass).